The chain runs to 136 residues: MGKFMKPGKVVMVLAGRYAGRKAVIVKNIDDGTADRPYSHALVAGIDRYPRKVTAPMGKKKIAKRSKIKAFVKVYNYNHLMPTRYSVDIPLDKTVVNKDVFRDPALKSKARREAKVKFEERYKTGKNKWFFQKLRF.

Residues 5-40 (MKPGKVVMVLAGRYAGRKAVIVKNIDDGTADRPYSH) form the KOW domain.

Belongs to the eukaryotic ribosomal protein eL27 family. In terms of assembly, component of the large ribosomal subunit.

The protein localises to the cytoplasm. It is found in the cytosol. The protein resides in the rough endoplasmic reticulum. Its function is as follows. Component of the large ribosomal subunit. This is Large ribosomal subunit protein eL27 (rpl27) from Hippocampus comes (Tiger tail seahorse).